The chain runs to 759 residues: MKIAIVLLAIIALVAASSISKHEVKIADKEFLAKQKFLFEIVYRVEDPLMFEEWIKMGKTFTFDKSGYTHFDMYMEKFYEAYKYGAILPKGEFFYYAKNWETFQRNVAFARMHFNEGMFVYALTLAVIHRDDFQGLILPSIHEIFPQYFFNSKFVYEAEKFDYDVWSKYIMYEKEYKDILYKDYSTFYKNHDNHHYYYFTKDFKTYQWWKMMGLGEHWYSEDRFMLRDNMNKYNKDSKYLEIFEGTKMFFMPVDYTRDIEFFNKESVLSYFTEDVGLNTYWYYLNMDYAFILDGKTFGLNKDRRGEYWLYNVRQLLSRYYMERLTHGYGEIPHFSFLNTIEHGYDSQLVYNNGVGFSYRKNYYEVESYGKFSYYYKVMDFFNRLDEIITKGVYVTYEGKTIDLRKPESIEYIGSIMQGNVDTFDNYFFKYRYMFAHMYFGDVNTHDFEVFPHIFLNYETMMRDPMFYMFYKKIASVYFQFFNYVKPYTHEELLFPGVTIKDVKVSELVTYFDLVDFDVTNLMNDEMTFVDGQFVWDKTLLARQMRLNHKPFDFDFVIESDKSHKVVIRTFLGPKYDEFGRVITLTENRQNFMEIDSFIYTLKSGVNDFKRLSKDFYWTVEDRTTYNELYKYVMLALQGKYDFPLDISEPHCGFPDRLVLPHGWYKGMPMQFFFYIAPYTASYGPFSTYDSTYACGIGSGVRHIDEMPFGYPFDREIDEYEFFVPNMYFKDVKIYHQDTFDKYYGKKYENFGHFDYSYYH.

A signal peptide spans 1-16; the sequence is MKIAIVLLAIIALVAA.

The protein belongs to the hemocyanin family. Heterohexamer. As to expression, fat body.

It localises to the secreted. It is found in the extracellular space. In terms of biological role, arylphorin is a larval storage protein (LSP) which may serve as a storage protein used primarily as a source of aromatic amino acids for protein synthesis during metamorphosis. It is a constituent of the sclerotizing system of the cuticle, and serves as a carrier for ecdysteroid hormone. In Calliphora vicina (Blue blowfly), this protein is Arylphorin subunit A4.